A 125-amino-acid chain; its full sequence is uncharacterized protein (125 aa).

This is an uncharacterized protein from Pasteurella multocida (strain Pm70).